The primary structure comprises 40 residues: Potassium channel toxin alpha-KTx 12.3 (40 aa).

4 disulfide bridges follow: cysteine 2–cysteine 5, cysteine 10–cysteine 31, cysteine 16–cysteine 36, and cysteine 20–cysteine 38.

In terms of tissue distribution, expressed by the venom gland.

The protein resides in the secreted. In terms of biological role, inhibits high conductance calcium-activated potassium channels (KCNMA). Inhibits Shaker B potassium channels. The protein is Potassium channel toxin alpha-KTx 12.3 of Tityus costatus (Brazilian scorpion).